A 764-amino-acid chain; its full sequence is Ergosteryl-beta-glucosidase (764 aa).

Catalysis depends on E515, which acts as the Nucleophile. Residues 588-629 (HDTRAKTPTPEPSPASTVASVSTSTSKSGSSQPPSFIKPDNH) form a disordered region. T594 carries the post-translational modification Phosphothreonine. Low complexity predominate over residues 601-622 (PASTVASVSTSTSKSGSSQPPS).

This sequence belongs to the glycosyl hydrolase 5 (cellulase A) family.

Its subcellular location is the cytoplasm. The protein resides in the cytosol. It localises to the vacuole membrane. The catalysed reaction is ergosteryl 3-beta-D-glucoside + H2O = ergosterol + D-glucose. Ergosteryl beta-glucosidase involved in the ergosteryl beta-glucoside (EG) catabolic pathway and vacuole formation via hydrolysis of EG to generate glucose. Is also able to hydrolyze cholesteryl beta-glucoside and sitosteryl beta-glucoside to generate glucose; and C6-7-nitro-2,1,3-benzoxadiazole (NBD)-GlcCer to generate C6-NBD-ceramide (Cer). This is Ergosteryl-beta-glucosidase from Saccharomyces cerevisiae (strain ATCC 204508 / S288c) (Baker's yeast).